The sequence spans 510 residues: Gelatinase (510 aa).

The N-terminal stretch at 1-30 (MMKGNKILYILGTGIFVGSSCLFSSLFVAA) is a signal peptide. Positions 31–192 (EEQVYSESEV…IMEKQDLTEH (162 aa)) are excised as a propeptide. Residue Asp-324 coordinates Ca(2+). His-328 lines the Zn(2+) pocket. Glu-329 is an active-site residue. Zn(2+) contacts are provided by His-332 and Glu-352. Residue Ser-376 participates in Ca(2+) binding. The active-site Proton donor is His-419.

It belongs to the peptidase M4 family.

It is found in the secreted. It carries out the reaction Preferential cleavage: Xaa-|-Leu, Xaa-|-Phe, Xaa-|-Tyr, Xaa-|-Ala.. Its activity is regulated as follows. Inhibited by L-leucine hydroxamate and phosphoramidon. Not inhibited by phenylmethanesulfonyl fluoride. Reversibly inactivated by straight-chain aliphatic alcohols. Metalloprotease capable of the hydrolysis of insoluble hydrophobic substrates. Hydrolyzes azocoll and gelatin and, at a lower rate, soluble and insoluble collagens. Does not cleave short synthetic peptides. Preferentially hydrolyzes the 24-Phe-|-Phe-25 bond in the insulin B-chain, followed by the 5-His-|-Leu-6 bond. Inactivates endothelin-1, primarily by cleavage of the 5-Ser-|-Leu-6 and 16-His-|-Leu-17 bonds. Hydrolyzes the alpha chain of C3 to generate a C3b-like protein. Inhibits complement-mediated hemolysis and opsinization of bacteria. Hydrolyzes the insect antimicrobial peptide cecropin. Decreases the length of E.faecalis chains via the activation of autolysin. Degrades polymerized fibrin. The polypeptide is Gelatinase (Enterococcus faecalis (strain ATCC 700802 / V583)).